Reading from the N-terminus, the 270-residue chain is Interleukin-1 alpha (270 aa).

Residues 1-114 constitute a propeptide that is removed on maturation; that stretch reads MAKVPDLFED…HDLEETIQPR (114 aa). Asn-46 carries N-linked (GlcNAc...) asparagine glycosylation. At Lys-85 the chain carries N6-acetyllysine. The nuclear localization signal (NLS) stretch occupies residues 85–89; it reads KKRRL. Residue Ser-90 is modified to Phosphoserine. An N-linked (GlcNAc...) asparagine glycan is attached at Asn-139.

It belongs to the IL-1 family. In terms of assembly, monomer. Interacts with TMED10; the interaction mediates the translocation from the cytoplasm into the ERGIC (endoplasmic reticulum-Golgi intermediate compartment) and thereby secretion. Interacts with IL1R1. Interacts with S100A13; this interaction is the first step in the export of IL1A, followed by direct translocation of this complex across the plasma membrane. In terms of processing, acetylated within its nuclear localization sequence, which impacts subcellular localization. Proteolytic processed by CAPN1 in a calcium-dependent manner. Cleavage from 31 kDa precursor to 18 kDa biologically active molecules. Post-translationally, phosphorylated. Phosphorylation greatly enhances susceptibility to digestion and promotes the conversion of pre-IL1A alpha to the biologically active IL1A.

The protein resides in the nucleus. It is found in the cytoplasm. The protein localises to the secreted. In terms of biological role, cytokine constitutively present intracellularly in nearly all resting non-hematopoietic cells that plays an important role in inflammation and bridges the innate and adaptive immune systems. After binding to its receptor IL1R1 together with its accessory protein IL1RAP, forms the high affinity interleukin-1 receptor complex. Signaling involves the recruitment of adapter molecules such as MYD88, IRAK1 or IRAK4. In turn, mediates the activation of NF-kappa-B and the three MAPK pathways p38, p42/p44 and JNK pathways. Within the cell, acts as an alarmin and cell death results in its liberation in the extracellular space after disruption of the cell membrane to induce inflammation and alert the host to injury or damage. In addition to its role as a danger signal, which occurs when the cytokine is passively released by cell necrosis, directly senses DNA damage and acts as signal for genotoxic stress without loss of cell integrity. In Rattus norvegicus (Rat), this protein is Interleukin-1 alpha.